Here is a 100-residue protein sequence, read N- to C-terminus: Small ribosomal subunit protein uS14c (100 aa).

Belongs to the universal ribosomal protein uS14 family. In terms of assembly, part of the 30S ribosomal subunit.

Its subcellular location is the plastid. It localises to the chloroplast. In terms of biological role, binds 16S rRNA, required for the assembly of 30S particles. The sequence is that of Small ribosomal subunit protein uS14c from Populus alba (White poplar).